The following is a 133-amino-acid chain: Major seminal plasma glycoprotein PSP-I (133 aa).

Residues 1-24 (MKLGSAIPWALLFSTATLISTGWG) form the signal peptide. Cysteines 30 and 51 form a disulfide. Residues 30 to 130 (CGGRLTDDYG…SPYEIIFLRD (101 aa)) enclose the CUB domain. N-linked (GlcNAc...) (complex) asparagine glycosylation occurs at Asn71. A disulfide bridge links Cys74 with Cys95.

In terms of assembly, monomer or heterodimer with PSP-II (depending on the type of glycosylation of PSP-I). In terms of tissue distribution, seminal plasma or sperm.

It is found in the secreted. In terms of biological role, not yet identified, major porcine seminal plasma protein. Can bind soybean trypsin inhibitor after deglycosylation. This is Major seminal plasma glycoprotein PSP-I from Sus scrofa (Pig).